The sequence spans 329 residues: T-lymphocyte activation antigen CD86 (329 aa).

Positions 1-23 are cleaved as a signal peptide; that stretch reads MDPQCTMGLSNILFVMAFLLSGA. Topologically, residues 24–247 are extracellular; it reads APLKIQAYFN…DPQPPPDHIP (224 aa). N-linked (GlcNAc...) asparagine glycans are attached at residues N33, N47, N135, N146, N154, N177, N192, and N213. One can recognise an Ig-like V-type domain in the interval 33–131; that stretch reads NETADLPCQF…RIHQMNSELS (99 aa). Cysteines 40 and 110 form a disulfide. The region spanning 150–225 is the Ig-like C2-type domain; that stretch reads NVYINLTCSS…IFCILETDKT (76 aa). An intrachain disulfide couples C157 to C218. A helical transmembrane segment spans residues 248 to 268; sequence WITAVLPTVIICVMVFCLILW. Residues 269–329 are Cytoplasmic-facing; the sequence is KWKKKKRPRN…SSCDKSDTCF (61 aa). The disordered stretch occupies residues 277-329; sequence RNSYKCGTNTMEREESEQTKKREKIHIPERSDEAQRVFKSSKTSSCDKSDTCF. Residues 287-312 are compositionally biased toward basic and acidic residues; it reads MEREESEQTKKREKIHIPERSDEAQR.

In terms of assembly, homodimer. Interacts with MARCH8. Interacts (via cytoplasmic domain) with PHB1 and PHB2; the interactions increases after priming with CD40. Interacts with CD28. As to quaternary structure, (Microbial infection) Interacts with adenovirus subgroup b fiber protein. (Microbial infection) Interacts with Orthopoxvirus OPG038/M2 protein, inhibiting the interaction with CTLA4 and CD28. Polyubiquitinated; which is promoted by MARCH8 and results in endocytosis and lysosomal degradation. Expressed by activated B-lymphocytes and monocytes.

It localises to the cell membrane. Receptor involved in the costimulatory signal essential for T-lymphocyte proliferation and interleukin-2 production, by binding CD28 or CTLA-4. May play a critical role in the early events of T-cell activation and costimulation of naive T-cells, such as deciding between immunity and anergy that is made by T-cells within 24 hours after activation. Also involved in the regulation of B cells function, plays a role in regulating the level of IgG(1) produced. Upon CD40 engagement, activates NF-kappa-B signaling pathway via phospholipase C and protein kinase C activation. Functionally, interferes with the formation of CD86 clusters, and thus acts as a negative regulator of T-cell activation. Its function is as follows. (Microbial infection) Acts as a receptor for adenovirus subgroup B. This is T-lymphocyte activation antigen CD86 (CD86) from Homo sapiens (Human).